An 86-amino-acid chain; its full sequence is Myosuppressin (86 aa).

The signal sequence occupies residues 1–18; the sequence is MAIFCNNVLAALPTQCNP. The propeptide occupies 19–70; it reads GFLDDLPPRIRKVCVALSRIYELGSEMESYIGDKENHITGFHESIPLLDSGV. Q73 is subject to Pyrrolidone carboxylic acid. Residue F82 is modified to Phenylalanine amide.

It localises to the secreted. In terms of biological role, myoinhibiting neuropeptide. The protein is Myosuppressin of Apis mellifera (Honeybee).